A 424-amino-acid polypeptide reads, in one-letter code: UDP-N-acetylglucosamine 1-carboxyvinyltransferase (424 aa).

22-23 serves as a coordination point for phosphoenolpyruvate; sequence KN. Residue R93 coordinates UDP-N-acetyl-alpha-D-glucosamine. Residue C117 is the Proton donor of the active site. C117 is modified (2-(S-cysteinyl)pyruvic acid O-phosphothioketal). UDP-N-acetyl-alpha-D-glucosamine contacts are provided by residues 122–126, D307, and V329; that span reads RPIDL.

It belongs to the EPSP synthase family. MurA subfamily.

It is found in the cytoplasm. The catalysed reaction is phosphoenolpyruvate + UDP-N-acetyl-alpha-D-glucosamine = UDP-N-acetyl-3-O-(1-carboxyvinyl)-alpha-D-glucosamine + phosphate. The protein operates within cell wall biogenesis; peptidoglycan biosynthesis. Cell wall formation. Adds enolpyruvyl to UDP-N-acetylglucosamine. This is UDP-N-acetylglucosamine 1-carboxyvinyltransferase from Chlorobium luteolum (strain DSM 273 / BCRC 81028 / 2530) (Pelodictyon luteolum).